The sequence spans 189 residues: MGLLDAAVSRQNVLVTSVDSVLNWARLSSLWPMGFGLACCAIEMMATNASNYDLERFGIFPRSSPRQSDLMIVAGTVTMKMAERVVRLYEQMPEPRYVLSMGSCSNCGGPYWEHGYHVLKGVDRVIPVDVYVPGCPPRPEALIGGLMKIQELIRMEGLGVSRADALKKLAEAESDPQPLIEEARKQKTA.

Residues cysteine 39, cysteine 40, cysteine 104, and cysteine 135 each coordinate [4Fe-4S] cluster.

It belongs to the complex I 20 kDa subunit family. In terms of assembly, NDH-1 is composed of 14 different subunits. Subunits NuoB, C, D, E, F, and G constitute the peripheral sector of the complex. Requires [4Fe-4S] cluster as cofactor.

The protein resides in the cell inner membrane. It catalyses the reaction a quinone + NADH + 5 H(+)(in) = a quinol + NAD(+) + 4 H(+)(out). Its function is as follows. NDH-1 shuttles electrons from NADH, via FMN and iron-sulfur (Fe-S) centers, to quinones in the respiratory chain. The immediate electron acceptor for the enzyme in this species is believed to be a menaquinone. Couples the redox reaction to proton translocation (for every two electrons transferred, four hydrogen ions are translocated across the cytoplasmic membrane), and thus conserves the redox energy in a proton gradient. This is NADH-quinone oxidoreductase subunit B from Chlorobium phaeovibrioides (strain DSM 265 / 1930) (Prosthecochloris vibrioformis (strain DSM 265)).